The sequence spans 160 residues: SsrA-binding protein (160 aa).

Belongs to the SmpB family.

The protein localises to the cytoplasm. Its function is as follows. Required for rescue of stalled ribosomes mediated by trans-translation. Binds to transfer-messenger RNA (tmRNA), required for stable association of tmRNA with ribosomes. tmRNA and SmpB together mimic tRNA shape, replacing the anticodon stem-loop with SmpB. tmRNA is encoded by the ssrA gene; the 2 termini fold to resemble tRNA(Ala) and it encodes a 'tag peptide', a short internal open reading frame. During trans-translation Ala-aminoacylated tmRNA acts like a tRNA, entering the A-site of stalled ribosomes, displacing the stalled mRNA. The ribosome then switches to translate the ORF on the tmRNA; the nascent peptide is terminated with the 'tag peptide' encoded by the tmRNA and targeted for degradation. The ribosome is freed to recommence translation, which seems to be the essential function of trans-translation. The sequence is that of SsrA-binding protein from Escherichia coli O6:K15:H31 (strain 536 / UPEC).